The following is a 117-amino-acid chain: NADH-ubiquinone oxidoreductase chain 3 (117 aa).

3 helical membrane-spanning segments follow: residues 4–24 (FLGILIYFFIALALSLLLLGL), 61–81 (LVAILFIIFDLEVAFLFPWAL), and 86–106 (IGYFGFWSMMLFLFILTVGFI).

It belongs to the complex I subunit 3 family.

It is found in the mitochondrion membrane. It carries out the reaction a ubiquinone + NADH + 5 H(+)(in) = a ubiquinol + NAD(+) + 4 H(+)(out). Its function is as follows. Core subunit of the mitochondrial membrane respiratory chain NADH dehydrogenase (Complex I) that is believed to belong to the minimal assembly required for catalysis. Complex I functions in the transfer of electrons from NADH to the respiratory chain. The immediate electron acceptor for the enzyme is believed to be ubiquinone. The polypeptide is NADH-ubiquinone oxidoreductase chain 3 (NAD3) (Prototheca wickerhamii).